Here is a 208-residue protein sequence, read N- to C-terminus: Large ribosomal subunit protein uL4 (208 aa).

Basic and acidic residues predominate over residues Ala47 to Arg58. Residues Ala47–Gly84 are disordered.

This sequence belongs to the universal ribosomal protein uL4 family. As to quaternary structure, part of the 50S ribosomal subunit.

One of the primary rRNA binding proteins, this protein initially binds near the 5'-end of the 23S rRNA. It is important during the early stages of 50S assembly. It makes multiple contacts with different domains of the 23S rRNA in the assembled 50S subunit and ribosome. Its function is as follows. Forms part of the polypeptide exit tunnel. The polypeptide is Large ribosomal subunit protein uL4 (Sphingopyxis alaskensis (strain DSM 13593 / LMG 18877 / RB2256) (Sphingomonas alaskensis)).